A 411-amino-acid polypeptide reads, in one-letter code: Bestrophin homolog 26 (411 aa).

The next 4 helical transmembrane spans lie at 30-50, 73-93, 235-255, and 272-292; these read FTAIFKELCLFLGLYFLFMVI, SHQEFTIPLEFLLGFFVSSVV, IPIPLAYPQAVFLAVRCYFAV, and TWITFFPVLTTFQYIFMMGWM.

Belongs to the anion channel-forming bestrophin (TC 1.A.46) family. Calcium-sensitive chloride channel subfamily. In terms of assembly, forms oligomers.

The protein localises to the cell membrane. Forms chloride channels. In Caenorhabditis elegans, this protein is Bestrophin homolog 26 (best-26).